The primary structure comprises 195 residues: O-methyltransferase (195 aa).

It belongs to the methyltransferase superfamily.

It functions in the pathway secondary metabolite biosynthesis. In terms of biological role, O-methyltransferase; part of the gene cluster that mediates the biosynthesis of pyrophen and campyrone B, which represent a class of fungal amino acid-derived alpha-pyrone natural products. The first step of pyrophen biosynthesis is catalyzed by the PKS-NRPS hybrid synthetase ATPKS that uptakes and condensates L-phenylalanine and malonyl-CoA in order to produce desmethyldesacetylpyrophen. Although the A domain does not discriminate between 2 enantiomeric phenylalanines, the downstream KS domain must play a gate keeping role to stereoselectively accept the L-phenylalanyl-S-phosphopantetheine (Ppant)-T domain intermediate for chain elongation. The resulting amino acid derived diketide is off-loaded through lactonization to yield the alpha-pyrone intermediate desmethyldesacetylpyrophen. The cluster-specific O-methyltransferase (OMT) then methylates desmethyldesacetylpyrophen to desacetylpyrophen, which is further acetylated to pyrophen by an endogenous yet unidentified N-acetyltransferase. ATPKS has relaxed substrate specificity to activate and extend branched-chain amino acid L-leucine to produce small amounts of campyrone B. This is O-methyltransferase from Aspergillus niger (strain ATCC 1015 / CBS 113.46 / FGSC A1144 / LSHB Ac4 / NCTC 3858a / NRRL 328 / USDA 3528.7).